We begin with the raw amino-acid sequence, 350 residues long: Hepatocyte nuclear factor 3-gamma (350 aa).

A DNA-binding region (fork-head) is located at residues 116 to 207; sequence AKPPYSYISL…GNMFENGCYL (92 aa). The disordered stretch occupies residues 217–276; the sequence is EKVKKGGSGAATTTRNGTGSAASTTTPAATVTSPPQPPPPAPEPEAQGGEDVGALDCGSP. Positions 226–249 are enriched in low complexity; it reads AATTTRNGTGSAASTTTPAATVTS. The segment covering 250–259 has biased composition (pro residues); it reads PPQPPPPAPE.

As to quaternary structure, interacts with FOXA2. Expressed in erythroleukemia and hepatoma cell lines and in liver and pancreas. Not expressed in any other cell lines or tissues examined.

It localises to the nucleus. Its function is as follows. Transcription factor that is thought to act as a 'pioneer' factor opening the compacted chromatin for other proteins through interactions with nucleosomal core histones and thereby replacing linker histones at target enhancer and/or promoter sites. Originally described as a transcription activator for a number of liver genes such as AFP, albumin, tyrosine aminotransferase, PEPCK, etc. Interacts with the cis-acting regulatory regions of these genes. Involved in glucose homeostasis; binds to and activates transcription from the G6PC1 promoter. Binds to the CYP3A4 promoter and activates its transcription in cooperation with CEBPA. Binds to the CYP3A7 promoter together with members of the CTF/NF-I family. Involved in regulation of neuronal-specific transcription. May be involved in regulation of spermatogenesis. The polypeptide is Hepatocyte nuclear factor 3-gamma (FOXA3) (Homo sapiens (Human)).